The primary structure comprises 548 residues: Probable nuclear hormone receptor HR3 (548 aa).

Residues 1–27 (MNNNQFHELFGSQWPPDQHGGHSSAST) are disordered. A DNA-binding region (nuclear receptor) is located at residues 101-176 (IIPCKVCGDK…LGMSRDAVKF (76 aa)). NR C4-type zinc fingers lie at residues 104-124 (CKVCGDKSSGVHYGVITCEGC) and 140-164 (CPRNKACVVDRVNRNRCQYCRLQKC). The disordered stretch occupies residues 198-228 (MRAQNDAAPDSVYDAQQQTPSSSDQFHGHYN). The segment covering 211-222 (DAQQQTPSSSDQ) has biased composition (polar residues). An NR LBD domain is found at 295–539 (ISKVLVKSLA…PALYKELFSL (245 aa)).

The protein belongs to the nuclear hormone receptor family. NR1 subfamily.

It is found in the nucleus. Putative receptor whose ligand is not yet known. This chain is Probable nuclear hormone receptor HR3 (HR3), found in Manduca sexta (Tobacco hawkmoth).